A 524-amino-acid chain; its full sequence is Zinc finger CCCH domain-containing protein 37 (524 aa).

The disordered stretch occupies residues 19–39 (ASTVSPAPPPPQQPLPPKTGL). Residues 24-35 (PAPPPPQQPLPP) show a composition bias toward pro residues. C3H1-type zinc fingers lie at residues 174–202 (RAGE…HPIW), 225–253 (RPGE…HPRE), and 268–296 (RPSE…HPKD). Residues 300 to 319 (PSSSQDIGSSVGLTSEPDAT) are disordered. C3H1-type zinc fingers lie at residues 340-368 (RSGE…HPER), 420-448 (RPGQ…HPAD), and 473-501 (REGA…HPPP). The disordered stretch occupies residues 505-524 (MAKTTSEADAAGATNTDTTQ). Over residues 512 to 524 (ADAAGATNTDTTQ) the composition is skewed to low complexity.

In terms of assembly, interacts with HEN4. Interacts with FLK and PEP. Highly expressed in inflorescences, at intermediate levels in leaves and stems and at lower levels in roots.

It is found in the nucleus speckle. In terms of biological role, involved in flower development. Functions in floral reproductive organ identity by binding AGAMOUS (AG) pre-mRNA and promoting its processing. Functions in association with HUA2 and HEN4. This chain is Zinc finger CCCH domain-containing protein 37 (HUA1), found in Arabidopsis thaliana (Mouse-ear cress).